Consider the following 1256-residue polypeptide: Muramidase-released protein (1256 aa).

The signal sequence occupies residues 1 to 47 (MRRSNKKSFDWYGTKQQFSIRKYHFGAASVLLGVSLVLGAGAQVVKA). Small repeat units follow at residues 663–681 (KTTG…VYEK) and 839–861 (KTDG…VYQK). Disordered stretches follow at residues 873 to 949 (PETD…VDTP), 967 to 994 (GNPI…KTVT), and 1028 to 1049 (KEPV…TDNK). Residues 953-1006 (VPVKKVVTNHVDEEGNPIAPQEEGTKPNKSIPGYEFTGKTVTDEDGNTTHIYKK) form a Large repeat. Residues 1033 to 1045 (DTPTSPEGTPYDT) show a composition bias toward polar residues. The stretch at 1064–1084 (RVDGTENGKVVEGETVVTYVY) is one Small repeat. Large repeat units follow at residues 1089-1142 (TPAK…IYKK) and 1143-1195 (TPAK…IYRK). Positions 1102–1137 (EGNPVAPQEEGTKPNKSIPGYEFTGKTVTDEDGNTT) are disordered. The disordered stretch occupies residues 1196–1229 (LSNKPTTPEKETPAKPQAGKTASGKAQLPNTGEA). Positions 1223–1227 (LPNTG) match the LPXTG sorting signal motif. Thr-1226 bears the Pentaglycyl murein peptidoglycan amidated threonine mark. The propeptide at 1227 to 1256 (GEASSVAGALGTAMLVATLAFARKRRRNED) is removed by sortase.

The protein resides in the secreted. It is found in the cell wall. This chain is Muramidase-released protein (mrp), found in Streptococcus suis.